An 899-amino-acid chain; its full sequence is Core protein VP3 (899 aa).

Positions 1 to 22 (MAEPPDAATPKTSPYLKGDELS) are disordered.

The protein belongs to the orbivirus VP3 family.

It localises to the virion. The VP3 protein is one of the five proteins (with VP1, VP4, VP6 and VP7) which form the inner capsid of the virus. In Antilocapra americana (Pronghorn), this protein is Core protein VP3 (Segment-3).